We begin with the raw amino-acid sequence, 300 residues long: MGEASESMKKISRGRLGGSWMGEPSDHHRHGDEQEEEEKTLELSLGLPGGGWRAACRDKGTTTKHSIAAAAAADDDDGDKSSMLSLGYSTLVSHSQGKANKNKGSPEEEEAHPPPATGNNALASNNNGCFQTRSPSTPVVGWPPVRTFRRNLATSSKASLELQNGKKAAKAEEIKRAPFIKINMDGVPIGRKIDLNAFDSYEKLSLAVDKLFRGLLAAQRDPLTAGAKDCQQEDVAISGLLDGTGEYTLVYEDYEGDKVLVGDVPWGMFVSSVKRLRVLKTSDLSSSLITSGRKRTAAEC.

Disordered stretches follow at residues 1–80 and 92–125; these read MGEA…DGDK and VSHSQGKANKNKGSPEEEEAHPPPATGNNALASN. Residues 43 to 47 carry the EAR-like (transcriptional repression) motif; that stretch reads LSLGL. The segment covering 92-103 has biased composition (polar residues); sequence VSHSQGKANKNK. The region spanning 177–281 is the PB1 domain; it reads APFIKINMDG…SVKRLRVLKT (105 aa).

This sequence belongs to the Aux/IAA family. In terms of assembly, homodimers and heterodimers. In terms of tissue distribution, expressed at low levels in roots and shoots.

It localises to the nucleus. Aux/IAA proteins are short-lived transcriptional factors that function as repressors of early auxin response genes at low auxin concentrations. This Oryza sativa subsp. japonica (Rice) protein is Auxin-responsive protein IAA7 (IAA7).